Reading from the N-terminus, the 175-residue chain is uncharacterized protein (175 aa).

The chain crosses the membrane as a helical span at residues 143–166 (TCFLFCAFVTSIFIETDYSIFFLL).

It is found in the membrane. This is an uncharacterized protein from Saccharomyces cerevisiae (strain ATCC 204508 / S288c) (Baker's yeast).